A 163-amino-acid polypeptide reads, in one-letter code: Regulator of chromosome segregation (163 aa).

Interacts with CpsD and ParB.

The protein resides in the cytoplasm. It localises to the nucleoid. It is found in the cell membrane. In terms of biological role, required for cell division and chromosome segregation. Binds to DNA and is involved in segregating the origin of replication (oriC) region to new daughter cells. When the nucleoid is not properly segregated, involved in blocking the cell division to protect the nucleoid against premature truncation by the newly forming septum, a function which is dependent on CpsD and its autophosphorylation level. This chain is Regulator of chromosome segregation, found in Streptococcus pneumoniae serotype 2 (strain D39 / NCTC 7466).